Reading from the N-terminus, the 97-residue chain is MHGNYTTLKEIVLQLEPPDPVGLHCNEQLDSSEDEVDELATQATQDVTQPYQIVTTCGTCSRKVRLVVQCTGTDIHHLHTLLLGSLDILCPVCAPKT.

Residues 1 to 41 (MHGNYTTLKEIVLQLEPPDPVGLHCNEQLDSSEDEVDELAT) are E7 terminal domain. Residues 23-27 (LHCNE) carry the LXCXE motif; interaction with host RB1 and TMEM173/STING motif. A zinc finger spans residues 57–93 (CGTCSRKVRLVVQCTGTDIHHLHTLLLGSLDILCPVC). Residues 75 to 83 (IHHLHTLLL) carry the Nuclear export signal motif.

The protein belongs to the papillomaviridae E7 protein family. In terms of assembly, homodimer. Homooligomer. Interacts with host RB1; this interaction induces dissociation of RB1-E2F1 complex thereby disrupting RB1 activity. Interacts with host EP300; this interaction represses EP300 transcriptional activity. Interacts with protein E2; this interaction inhibits E7 oncogenic activity. Interacts with host TMEM173/STING; this interaction impairs the ability of TMEM173/STING to sense cytosolic DNA and promote the production of type I interferon (IFN-alpha and IFN-beta). Post-translationally, highly phosphorylated.

Its subcellular location is the host cytoplasm. The protein resides in the host nucleus. In terms of biological role, plays a role in viral genome replication by driving entry of quiescent cells into the cell cycle. Stimulation of progression from G1 to S phase allows the virus to efficiently use the cellular DNA replicating machinery to achieve viral genome replication. E7 protein has both transforming and trans-activating activities. Induces the disassembly of the E2F1 transcription factor from RB1, with subsequent transcriptional activation of E2F1-regulated S-phase genes. Interferes with host histone deacetylation mediated by HDAC1 and HDAC2, leading to transcription activation. Also plays a role in the inhibition of both antiviral and antiproliferative functions of host interferon alpha. Interaction with host TMEM173/STING impairs the ability of TMEM173/STING to sense cytosolic DNA and promote the production of type I interferon (IFN-alpha and IFN-beta). This is Protein E7 from Homo sapiens (Human).